Consider the following 188-residue polypeptide: Pro-FMRFamide-related neuropeptide VF (188 aa).

The N-terminal stretch at 1–26 (MEIISLKRFILLTVATSSFLTSNTFC) is a signal peptide. Positions 27–57 (TDEFMMPHFHSKEGDGKYSQLRGIPKGEKER) are excised as a propeptide. Phenylalanine amide is present on Phe94. A propeptide spanning residues 97–106 (TIDEKRSPAA) is cleaved from the precursor. Disordered stretches follow at residues 116–144 (SHFP…QKPL) and 163–188 (IQSP…KPEK). Phe125 carries the phenylalanine amide modification. Residues 128 to 188 (TTARSPKTPA…TDDAERKPEK (61 aa)) constitute a propeptide that is removed on maturation.

This sequence belongs to the FARP (FMRFamide related peptide) family.

The protein resides in the secreted. Efficiently inhibits forskolin-induced production of cAMP. Acts as a potent negative regulator of gonadotropin synthesis and secretion. Induces secretion of prolactin. In terms of biological role, efficiently inhibits forskolin-induced production of cAMP. Blocks morphine-induced analgesia. This chain is Pro-FMRFamide-related neuropeptide VF (Npvf), found in Mus musculus (Mouse).